A 376-amino-acid polypeptide reads, in one-letter code: Chaperone protein DnaJ (376 aa).

Residues 5 to 70 form the J domain; sequence DYYEVLGVGR…DKKAAYDQFG (66 aa). A CR-type zinc finger spans residues 132–210; sequence GLTKELRIPT…CHGDGRVEKS (79 aa). Zn(2+)-binding residues include C145, C148, C162, C165, C184, C187, C198, and C201. CXXCXGXG motif repeat units follow at residues 145 to 152, 162 to 169, 184 to 191, and 198 to 205; these read CDLCDGSG, CTTCHGQG, CPTCHGRG, and CTKCHGDG.

It belongs to the DnaJ family. Homodimer. Requires Zn(2+) as cofactor.

The protein resides in the cytoplasm. Its function is as follows. Participates actively in the response to hyperosmotic and heat shock by preventing the aggregation of stress-denatured proteins and by disaggregating proteins, also in an autonomous, DnaK-independent fashion. Unfolded proteins bind initially to DnaJ; upon interaction with the DnaJ-bound protein, DnaK hydrolyzes its bound ATP, resulting in the formation of a stable complex. GrpE releases ADP from DnaK; ATP binding to DnaK triggers the release of the substrate protein, thus completing the reaction cycle. Several rounds of ATP-dependent interactions between DnaJ, DnaK and GrpE are required for fully efficient folding. Also involved, together with DnaK and GrpE, in the DNA replication of plasmids through activation of initiation proteins. In Shewanella putrefaciens (strain CN-32 / ATCC BAA-453), this protein is Chaperone protein DnaJ.